Here is a 122-residue protein sequence, read N- to C-terminus: UPF0102 protein RL0336 (122 aa).

This sequence belongs to the UPF0102 family.

This Rhizobium johnstonii (strain DSM 114642 / LMG 32736 / 3841) (Rhizobium leguminosarum bv. viciae) protein is UPF0102 protein RL0336.